We begin with the raw amino-acid sequence, 236 residues long: 7-cyano-7-deazaguanine synthase (236 aa).

7–17 (CSGGLDSVSLA) provides a ligand contact to ATP. Residues Cys185, Cys193, Cys196, and Cys199 each contribute to the Zn(2+) site.

The protein belongs to the QueC family. The cofactor is Zn(2+).

It catalyses the reaction 7-carboxy-7-deazaguanine + NH4(+) + ATP = 7-cyano-7-deazaguanine + ADP + phosphate + H2O + H(+). Its pathway is purine metabolism; 7-cyano-7-deazaguanine biosynthesis. Functionally, catalyzes the ATP-dependent conversion of 7-carboxy-7-deazaguanine (CDG) to 7-cyano-7-deazaguanine (preQ(0)). The polypeptide is 7-cyano-7-deazaguanine synthase (Rhizobium leguminosarum bv. trifolii (strain WSM2304)).